Here is a 325-residue protein sequence, read N- to C-terminus: Brorin (325 aa).

A signal peptide spans Met1–Cys27. The disordered stretch occupies residues Ala37–Glu121. Composition is skewed to basic and acidic residues over residues Gly44–Pro56 and Arg64–Ser78. The Mediates cell adhesion motif lies at Arg114–Asp116. 2 VWFC domains span residues Lys153 to Lys212 and Asn216 to Lys274.

In terms of assembly, peripherally associated with AMPAR complex. AMPAR complex consists of an inner core made of 4 pore-forming GluA/GRIA proteins (GRIA1, GRIA2, GRIA3 and GRIA4) and 4 major auxiliary subunits arranged in a twofold symmetry. One of the two pairs of distinct binding sites is occupied either by CNIH2, CNIH3 or CACNG2, CACNG3. The other harbors CACNG2, CACNG3, CACNG4, CACNG8 or GSG1L. This inner core of AMPAR complex is complemented by outer core constituents binding directly to the GluA/GRIA proteins at sites distinct from the interaction sites of the inner core constituents. Outer core constituents include at least PRRT1, PRRT2, CKAMP44/SHISA9, FRRS1L and NRN1. The proteins of the inner and outer core serve as a platform for other, more peripherally associated AMPAR constituents, including VWC2. Alone or in combination, these auxiliary subunits control the gating and pharmacology of the AMPAR complex and profoundly impact their biogenesis and protein processing.

The protein localises to the secreted. The protein resides in the extracellular space. It is found in the extracellular matrix. It localises to the basement membrane. Its subcellular location is the synapse. Its function is as follows. BMP antagonist which may play a role in neural development. Promotes cell adhesion. The sequence is that of Brorin (VWC2) from Homo sapiens (Human).